Here is a 217-residue protein sequence, read N- to C-terminus: Neurotrophic factor BDNF precursor form (217 aa).

A propeptide spanning residues 1 to 108 is cleaved from the precursor; it reads PMKEVSIRGQ…AANMSMRVRR (108 aa). An N-linked (GlcNAc...) asparagine glycan is attached at N101. 2 disulfide bridges follow: C121–C188 and C166–C217.

The protein belongs to the NGF-beta family.

Its subcellular location is the secreted. Promotes the survival of neuronal populations that are all located either in the central nervous system or directly connected to it. The protein is Neurotrophic factor BDNF precursor form (BDNF) of Acrantophis dumerili (Dumeril's ground boa).